The primary structure comprises 204 residues: Putative AgrB-like protein (204 aa).

The next 5 membrane-spanning stretches (helical) occupy residues V51–W73, L87–I107, N111–A131, A151–A168, and L173–Y190.

The protein belongs to the AgrB family.

It localises to the cell membrane. In terms of biological role, may be involved in the proteolytic processing of a quorum sensing system signal molecule precursor. This is Putative AgrB-like protein from Listeria innocua serovar 6a (strain ATCC BAA-680 / CLIP 11262).